Reading from the N-terminus, the 299-residue chain is MKPDAHQVKQFLLNLQDTICQQLTAVDGAEFVEDSWQREAGGGGRSRVLRNGGVFEQAGVNFSHVHGEAMPASATAHRPELAGRSFEAMGVSLVVHPHNPYVPTSHANVRFFIAEKPGADPVWWFGGGFDLTPFYGFEEDAIHWHRTARDLCLPFGEDVYPRYKKWCDEYFYLKHRNEQRGIGGLFFDDLNTPDFDRCFAFMQAVGKGYTDAYLPIVERRKAMAYGERERNFQLYRRGRYVEFNLVWDRGTLFGLQTGGRTESILMSMPPLVRWEYDYQPKDGSPEAALSEFIKVRDWV.

Residue S92 coordinates substrate. Positions 96 and 106 each coordinate Mn(2+). H106 (proton donor) is an active-site residue. Position 108 to 110 (108 to 110) interacts with substrate; it reads NVR. 2 residues coordinate Mn(2+): H145 and H175. Positions 240–275 are important for dimerization; sequence YVEFNLVWDRGTLFGLQTGGRTESILMSMPPLVRWE. 258 to 260 lines the substrate pocket; that stretch reads GGR.

Belongs to the aerobic coproporphyrinogen-III oxidase family. In terms of assembly, homodimer. Mn(2+) serves as cofactor.

It is found in the cytoplasm. It carries out the reaction coproporphyrinogen III + O2 + 2 H(+) = protoporphyrinogen IX + 2 CO2 + 2 H2O. It functions in the pathway porphyrin-containing compound metabolism; protoporphyrin-IX biosynthesis; protoporphyrinogen-IX from coproporphyrinogen-III (O2 route): step 1/1. Involved in the heme biosynthesis. Catalyzes the aerobic oxidative decarboxylation of propionate groups of rings A and B of coproporphyrinogen-III to yield the vinyl groups in protoporphyrinogen-IX. The sequence is that of Oxygen-dependent coproporphyrinogen-III oxidase from Escherichia coli (strain K12 / MC4100 / BW2952).